The primary structure comprises 906 residues: MAGNVKKSSGAGGGSGSGGSGSGGLIGLMKDAFQPHHHHHHHLSPHPPGTVDKKMVEKCWKLMDKVVRLCQNPKLALKNSPPYILDLLPDTYQHLRTILSRYEGKMETLGENEYFRVFMENLMKKTKQTISLFKEGKERMYEENSQPRRNLTKLSLIFSHMLAELKGIFPSGLFQGDTFRITKADAAEFWRKAFGEKTIVPWKSFRQALHEVHPISSGLEAMALKSTIDLTCNDYISVFEFDIFTRLFQPWSSLLRNWNSLAVTHPGYMAFLTYDEVKARLQKFIHKPGSYIFRLSCTRLGQWAIGYVTADGNILQTIPHNKPLFQALIDGFREGFYLFPDGRNQNPDLTGLCEPTPQDHIKVTQEQYELYCEMGSTFQLCKICAENDKDVKIEPCGHLMCTSCLTSWQESEGQGCPFCRCEIKGTEPIVVDPFDPRGSGSLLRQGAEGAPSPNYDDDDDERADDTLFMMKELAGAKVERPPSPFSMAPQASLPPVPPRLDLLPQRVCVPSSASALGTASKAASGSLHKDKPLPVPPTLRDLPPPPPPDRPYSVGAESRPQRRPLPCTPGDCPSRDKLPPVPSSRLGDSWLPRPIPKVPVSAPSSSDPWTGRELTNRHSLPFSLPSQMEPRPDVPRLGSTFSLDTSMSMNSSPLVGPECDHPKIKPSSSANAIYSLAARPLPVPKLPPGEQCEGEEDTEYMTPSSRPLRPLDTSQSSRACDCDQQIDSCTYEAMYNIQSQAPSITESSTFGEGNLAAAHANTGPEESENEDDGYDVPKPPVPAVLARRTLSDISNASSSFGWLSLDGDPTTNVTEGSQVPERPPKPFPRRINSERKAGSCQQGSGPAASAATASPQLSSEIENLMSQGYSYQDIQKALVIAQNNIEMAKNILREFVSISSPAHVAT.

The interval 1–21 (MAGNVKKSSGAGGGSGSGGSG) is disordered. The interval 1-357 (MAGNVKKSSG…DLTGLCEPTP (357 aa)) is sufficient for interaction with EPHB1. Gly residues predominate over residues 10–21 (GAGGGSGSGGSG). Positions 47 to 175 (PPGTVDKKMV…KGIFPSGLFQ (129 aa)) are 4H. Residues 47–351 (PPGTVDKKMV…GRNQNPDLTG (305 aa)) enclose the Cbl-PTB domain. The segment at 176–248 (GDTFRITKAD…FEFDIFTRLF (73 aa)) is EF-hand-like. Ca(2+) is bound by residues Asp-229, Thr-231, Asn-233, Tyr-235, and Glu-240. Positions 249–351 (QPWSSLLRNW…GRNQNPDLTG (103 aa)) are SH2-like. Residue Arg-294 coordinates 4-O-phospho-L-tyrosine. The linker stretch occupies residues 352–380 (LCEPTPQDHIKVTQEQYELYCEMGSTFQL). The tract at residues 358–906 (QDHIKVTQEQ…SISSPAHVAT (549 aa)) is required for ubiquitination of SPRED2. At Tyr-371 the chain carries Phosphotyrosine; by INSR. The RING-type zinc-finger motif lies at 381 to 420 (CKICAENDKDVKIEPCGHLMCTSCLTSWQESEGQGCPFCR). 3 disordered regions span residues 432-462 (DPFDPRGSGSLLRQGAEGAPSPNYDDDDDER), 477-498 (KVERPPSPFSMAPQASLPPVPP), and 519-667 (ASKA…IKPS). 3 positions are modified to phosphoserine: Ser-439, Ser-452, and Ser-483. The span at 533–550 (LPVPPTLRDLPPPPPPDR) shows a compositional bias: pro residues. A phosphoserine mark is found at Ser-619, Ser-642, Ser-668, and Ser-669. The segment covering 639-653 (STFSLDTSMSMNSSP) has biased composition (polar residues). The segment at 648-906 (SMNSSPLVGP…SISSPAHVAT (259 aa)) is interaction with CD2AP. Position 674 is a phosphotyrosine (Tyr-674). Residues 680–719 (PLPVPKLPPGEQCEGEEDTEYMTPSSRPLRPLDTSQSSRA) form a disordered region. Position 700 is a phosphotyrosine; by ABL1 (Tyr-700). Position 731 is a phosphotyrosine; by SRC (Tyr-731). Disordered regions lie at residues 743-781 (SITESSTFGEGNLAAAHANTGPEESENEDDGYDVPKPPV) and 799-854 (SFGW…ATAS). The span at 765–774 (EESENEDDGY) shows a compositional bias: acidic residues. Position 774 is a phosphotyrosine (Tyr-774). Low complexity predominate over residues 838–854 (GSCQQGSGPAASAATAS). The region spanning 856–895 (QLSSEIENLMSQGYSYQDIQKALVIAQNNIEMAKNILREF) is the UBA domain. The residue at position 900 (Ser-900) is a Phosphoserine.

Forms homodimers; IFT20 promotes the formation of stable homodimers. Interacts (phosphorylated at Tyr-731) with PIK3R1. Associates with NCK via its SH3 domain. The phosphorylated C-terminus interacts with CD2AP via its second SH3 domain. Binds to UBE2L3. Interacts with adapters SLA, SLA2 and with the phosphorylated C-terminus of SH2B2. Interacts with EGFR, SYK and ZAP70 via the highly conserved Cbl-N region. Also interacts with SORBS1 and INPPL1/SHIP2. Interacts with phosphorylated LAT2. Interacts with CBLB. Interacts with ALK, AXL, BLK, FGR and FGFR2. Interacts with CSF1R, EPHB1, FLT1, KDR, PDGFRA and PDGFRB; regulates receptor degradation through ubiquitination. Interacts with HCK and LYN. Interacts with ATX2. Interacts with TEK/TIE2 (tyrosine phosphorylated). Interacts with SH3KBP1 and this interaction is inhibited in the presence of SHKBP1 or ARAP1. Interacts with SIGLEC10. Interacts with IFT20. Interacts with SPRY2; the interaction inhibits CBL-mediated ubiquitination of EGFR. Interacts (phosphorylated at Tyr-774) with tensin TNS4 (via SH2 domain); the interaction is enhanced in the presence of EGF and reduces interaction of CBL with EGFR. Interacts with EGFR; the interaction is reduced in the presence of TNS4. Interacts with CD5. Interacts with CD93. As to quaternary structure, (Microbial infection) Interacts with M.tuberculosis LpqN, which influences the balance between intrinsic antibacterial and antiviral defense. Post-translationally, phosphorylated on tyrosine residues by ALK, EGFR, SYK, FYN and ZAP70. Phosphorylated on tyrosine residues in response to FLT1 and KIT signaling. Phosphorylated on tyrosine residues by INSR and FGR. Phosphorylated on several tyrosine residues by constitutively activated FGFR3. Not phosphorylated at Tyr-731 by FGFR3. Phosphorylated on tyrosine residues by activated CSF1R, PDGFRA and PDGFRB. Phosphorylated on tyrosine residues by HCK. In terms of processing, ubiquitinated, leading to its degradation via the proteasome. Ubiquitination is negatively regulated by IFT20.

Its subcellular location is the cytoplasm. The protein localises to the cell membrane. It localises to the cell projection. The protein resides in the cilium. It is found in the golgi apparatus. The enzyme catalyses S-ubiquitinyl-[E2 ubiquitin-conjugating enzyme]-L-cysteine + [acceptor protein]-L-lysine = [E2 ubiquitin-conjugating enzyme]-L-cysteine + N(6)-ubiquitinyl-[acceptor protein]-L-lysine.. It participates in protein modification; protein ubiquitination. Its function is as follows. E3 ubiquitin-protein ligase that acts as a negative regulator of many signaling pathways by mediating ubiquitination of cell surface receptors. Accepts ubiquitin from specific E2 ubiquitin-conjugating enzymes, and then transfers it to substrates promoting their degradation by the proteasome. Recognizes activated receptor tyrosine kinases, including KIT, FLT1, FGFR1, FGFR2, PDGFRA, PDGFRB, CSF1R, EPHA8 and KDR and mediates their ubiquitination to terminate signaling. Recognizes membrane-bound HCK, SRC and other kinases of the SRC family and mediates their ubiquitination and degradation. Ubiquitinates EGFR and SPRY2. Ubiquitinates NECTIN1 following association between NECTIN1 and herpes simplex virus 1/HHV-1 envelope glycoprotein D, leading to NECTIN1 removal from cell surface. Participates in signal transduction in hematopoietic cells. Plays an important role in the regulation of osteoblast differentiation and apoptosis. Essential for osteoclastic bone resorption. The 'Tyr-731' phosphorylated form induces the activation and recruitment of phosphatidylinositol 3-kinase to the cell membrane in a signaling pathway that is critical for osteoclast function. May be functionally coupled with the E2 ubiquitin-protein ligase UB2D3. In association with CBLB, required for proper feedback inhibition of ciliary platelet-derived growth factor receptor-alpha (PDGFRA) signaling pathway via ubiquitination and internalization of PDGFRA. The chain is E3 ubiquitin-protein ligase CBL (CBL) from Homo sapiens (Human).